The following is a 185-amino-acid chain: Elongation factor P (185 aa).

This sequence belongs to the elongation factor P family.

Its subcellular location is the cytoplasm. Its pathway is protein biosynthesis; polypeptide chain elongation. In terms of biological role, involved in peptide bond synthesis. Stimulates efficient translation and peptide-bond synthesis on native or reconstituted 70S ribosomes in vitro. Probably functions indirectly by altering the affinity of the ribosome for aminoacyl-tRNA, thus increasing their reactivity as acceptors for peptidyl transferase. The protein is Elongation factor P of Thermoanaerobacter sp. (strain X514).